We begin with the raw amino-acid sequence, 332 residues long: Ribosomal RNA small subunit methyltransferase C (332 aa).

This sequence belongs to the methyltransferase superfamily. RsmC family. As to quaternary structure, monomer.

Its subcellular location is the cytoplasm. The catalysed reaction is guanosine(1207) in 16S rRNA + S-adenosyl-L-methionine = N(2)-methylguanosine(1207) in 16S rRNA + S-adenosyl-L-homocysteine + H(+). Specifically methylates the guanine in position 1207 of 16S rRNA in the 30S particle. This Pseudomonas fluorescens (strain ATCC BAA-477 / NRRL B-23932 / Pf-5) protein is Ribosomal RNA small subunit methyltransferase C.